We begin with the raw amino-acid sequence, 398 residues long: Putative tyrosine-protein phosphatase C15H7.3 (398 aa).

Residues 1–15 (MERSQKSARKKKKTS) show a composition bias toward basic residues. The disordered stretch occupies residues 1–114 (MERSQKSARK…EPWSEEEPAK (114 aa)). The segment covering 18-40 (GNDRSIRSERKSKQKKPAGEKSQ) has biased composition (basic and acidic residues). Residues 41–50 (KSRRTRKSRG) show a composition bias toward basic residues. Residues 55–73 (GFTSRETIQPSSSGQSEGT) show a composition bias toward polar residues. The segment covering 74–114 (TRMDDQKDEKKDDKKEEKKEERKEEKKEEVKEPWSEEEPAK) has biased composition (basic and acidic residues). Positions 125-376 (TNVGGTFKQT…GTVHRSMACW (252 aa)) constitute a Tyrosine-protein phosphatase domain.

The protein belongs to the protein-tyrosine phosphatase family. Non-receptor class subfamily.

It catalyses the reaction O-phospho-L-tyrosyl-[protein] + H2O = L-tyrosyl-[protein] + phosphate. The chain is Putative tyrosine-protein phosphatase C15H7.3 from Caenorhabditis elegans.